The primary structure comprises 132 residues: UPF0299 membrane protein KPN78578_25390 (132 aa).

The next 4 membrane-spanning stretches (helical) occupy residues 5-25 (LTII…LYAG), 38-60 (GSII…PQWV), 66-86 (ILIR…MQYW), and 93-113 (LGPV…VVSW).

Belongs to the UPF0299 family.

The protein resides in the cell inner membrane. The protein is UPF0299 membrane protein KPN78578_25390 of Klebsiella pneumoniae subsp. pneumoniae (strain ATCC 700721 / MGH 78578).